The sequence spans 217 residues: Acyl-homoserine-lactone synthase (217 aa).

Belongs to the autoinducer synthase family.

It carries out the reaction a fatty acyl-[ACP] + S-adenosyl-L-methionine = an N-acyl-L-homoserine lactone + S-methyl-5'-thioadenosine + holo-[ACP] + H(+). In terms of biological role, required for the synthesis of OHHL (N-(3-oxohexanoyl)-L-homoserine lactone), an autoinducer molecule which binds to ExpR and thus acts in virulence (soft rot disease) through the activation of genes for plant tissue macerating enzymes. This chain is Acyl-homoserine-lactone synthase (expI), found in Pectobacterium parmentieri.